The chain runs to 148 residues: Hemoglobin subunit beta-1 (148 aa).

A Globin domain is found at 3 to 148 (EWTDAERTAI…VVSALCRQYH (146 aa)). Heme b contacts are provided by histidine 64 and histidine 93.

Heterotetramer of two alpha chains and two beta chains. In terms of tissue distribution, red blood cells.

Functionally, involved in oxygen transport from gills to the various peripheral tissues. This Danio rerio (Zebrafish) protein is Hemoglobin subunit beta-1 (ba1).